The chain runs to 397 residues: Elongation factor Tu (397 aa).

Residues 10–206 (KPHVNIGTIG…AVDQNIPEPQ (197 aa)) form the tr-type G domain. The interval 19–26 (GHIDHGKT) is G1. 19–26 (GHIDHGKT) contacts GTP. T26 serves as a coordination point for Mg(2+). A G2 region spans residues 62–66 (GITIS). The interval 83 to 86 (DCPG) is G3. Residues 83 to 87 (DCPGH) and 138 to 141 (NKSD) each bind GTP. The G4 stretch occupies residues 138–141 (NKSD). The G5 stretch occupies residues 176-178 (SAL).

Belongs to the TRAFAC class translation factor GTPase superfamily. Classic translation factor GTPase family. EF-Tu/EF-1A subfamily. In terms of assembly, monomer.

The protein resides in the cytoplasm. It catalyses the reaction GTP + H2O = GDP + phosphate + H(+). In terms of biological role, GTP hydrolase that promotes the GTP-dependent binding of aminoacyl-tRNA to the A-site of ribosomes during protein biosynthesis. This Thermobifida fusca (strain YX) protein is Elongation factor Tu.